The following is a 293-amino-acid chain: Glycine--tRNA ligase alpha subunit (293 aa).

It belongs to the class-II aminoacyl-tRNA synthetase family. Tetramer of two alpha and two beta subunits.

The protein resides in the cytoplasm. The catalysed reaction is tRNA(Gly) + glycine + ATP = glycyl-tRNA(Gly) + AMP + diphosphate. The polypeptide is Glycine--tRNA ligase alpha subunit (Picosynechococcus sp. (strain ATCC 27264 / PCC 7002 / PR-6) (Agmenellum quadruplicatum)).